Consider the following 218-residue polypeptide: Glutathione S-transferase Mu 1 (218 aa).

A GST N-terminal domain is found at 2 to 88; that stretch reads PMTLGYWDIR…YIARKHNLCG (87 aa). 7-8 contributes to the glutathione binding site; the sequence is YW. Thr-34 is subject to Phosphothreonine. Residues 43–46, Lys-50, 59–60, and 72–73 each bind glutathione; these read RSQW, NL, and QS. The GST C-terminal domain maps to 90 to 208; that stretch reads TEEEKIRVDI…KSSRFLPKPL (119 aa). Tyr-116 is a substrate binding site.

It belongs to the GST superfamily. Mu family. As to quaternary structure, homodimer.

The protein resides in the cytoplasm. The enzyme catalyses RX + glutathione = an S-substituted glutathione + a halide anion + H(+). The catalysed reaction is prostaglandin A2 + glutathione = prostaglandin A2-S-(R)-glutathione. It catalyses the reaction prostaglandin J2 + glutathione = prostaglandin J2-S-(R)-glutathione. It carries out the reaction prostaglandin J2 + glutathione = prostaglandin J2-S-(S)-glutathione. The enzyme catalyses prostaglandin A2 + glutathione = prostaglandin A2-S-(S)-glutathione. The catalysed reaction is 11(S)-hydroxy-14(S),15(S)-epoxy-(5Z,8Z,12E)-eicosatrienoate + glutathione = (11S,15S)-dihydroxy-14(R)-S-glutathionyl-(5Z,8Z,12E)-eicosatrienoate. In terms of biological role, conjugation of reduced glutathione to a wide number of exogenous and endogenous hydrophobic electrophiles. Involved in the formation of glutathione conjugates of both prostaglandin A2 (PGA2) and prostaglandin J2 (PGJ2). Participates in the formation of novel hepoxilin regioisomers. The protein is Glutathione S-transferase Mu 1 (GSTM1) of Macaca fascicularis (Crab-eating macaque).